The following is a 169-amino-acid chain: MQDAITAILNRYDLTGRYLDKTAVGQLESFFSSGLDRIKIAEIINDQATNILKEAAAQLYEEQPELLRPGGNSYTTRRYAACLRDIEYYLRYASYALVSGSTNILDQRVLNGLKDTYNSLSVPVAPTVRSIQLLQEIIEEELDLQSIKRTDIIQEPFQHLINALSEQDL.

Residue Asn72 is modified to N4-methylasparagine. Cys82 contributes to the (2R,3E)-phycocyanobilin binding site.

Belongs to the phycobiliprotein family. In terms of assembly, heterodimer of an alpha and a beta chain. In terms of processing, contains one covalently linked bilin chromophore.

Its subcellular location is the plastid. The protein localises to the chloroplast thylakoid membrane. In terms of biological role, light-harvesting photosynthetic bile pigment-protein from the phycobiliprotein complex. Allophycocyanin has a maximum absorption at approximately 650 nanometers. This is Allophycocyanin subunit beta-18 (apcF) from Pyropia yezoensis (Susabi-nori).